Reading from the N-terminus, the 622-residue chain is Membrane protein insertase YidC (622 aa).

A helical transmembrane segment spans residues 8 to 28 (LFLALILSMGIWMGVNYFFFP). A compositionally biased stretch (basic and acidic residues) spans 33 to 61 (KTSETKEVKVDKPSDDKQDQIQKEKKESR). Residues 33–70 (KTSETKEVKVDKPSDDKQDQIQKEKKESRTTIPSKGTK) form a disordered region. Helical transmembrane passes span 413 to 433 (FTIPNYGWSIIIFAILFKLVF), 484 to 504 (VGGCLPMVIQIPIFIALYTAF), 532 to 552 (AIPYFTQTGIGLNLLALLMVG), and 571 to 591 (MLMYVMPVMMLYIFWNMPSGV).

This sequence belongs to the OXA1/ALB3/YidC family. Type 1 subfamily. In terms of assembly, interacts with the Sec translocase complex via SecD. Specifically interacts with transmembrane segments of nascent integral membrane proteins during membrane integration.

It localises to the cell inner membrane. In terms of biological role, required for the insertion and/or proper folding and/or complex formation of integral membrane proteins into the membrane. Involved in integration of membrane proteins that insert both dependently and independently of the Sec translocase complex, as well as at least some lipoproteins. Aids folding of multispanning membrane proteins. This chain is Membrane protein insertase YidC, found in Leptospira borgpetersenii serovar Hardjo-bovis (strain JB197).